Here is a 268-residue protein sequence, read N- to C-terminus: Putative hydro-lyase ABAYE2440 (268 aa).

This sequence belongs to the D-glutamate cyclase family.

The polypeptide is Putative hydro-lyase ABAYE2440 (Acinetobacter baumannii (strain AYE)).